Here is a 351-residue protein sequence, read N- to C-terminus: Dihydroorotate dehydrogenase (quinone) (351 aa).

FMN-binding positions include 67-71 and threonine 91; that span reads AGFDK. A substrate-binding site is contributed by lysine 71. 116–120 contacts substrate; it reads NAMGF. Residues asparagine 145 and asparagine 178 each coordinate FMN. Asparagine 178 is a binding site for substrate. Catalysis depends on serine 181, which acts as the Nucleophile. Residue asparagine 183 participates in substrate binding. The FMN site is built by lysine 214 and threonine 242. 243–244 contacts substrate; that stretch reads NT. FMN-binding positions include glycine 262, glycine 291, and 312–313; that span reads YS.

The protein belongs to the dihydroorotate dehydrogenase family. Type 2 subfamily. As to quaternary structure, monomer. FMN is required as a cofactor.

The protein localises to the cell membrane. The catalysed reaction is (S)-dihydroorotate + a quinone = orotate + a quinol. It participates in pyrimidine metabolism; UMP biosynthesis via de novo pathway; orotate from (S)-dihydroorotate (quinone route): step 1/1. Catalyzes the conversion of dihydroorotate to orotate with quinone as electron acceptor. In Helicobacter pylori (strain HPAG1), this protein is Dihydroorotate dehydrogenase (quinone).